We begin with the raw amino-acid sequence, 443 residues long: tRNA(Ile2) 2-agmatinylcytidine synthetase TiaS (443 aa).

Belongs to the TiaS family.

The protein localises to the cytoplasm. The catalysed reaction is cytidine(34) in tRNA(Ile2) + agmatine + ATP + H2O = 2-agmatinylcytidine(34) in tRNA(Ile2) + AMP + 2 phosphate + 2 H(+). Its function is as follows. ATP-dependent agmatine transferase that catalyzes the formation of 2-agmatinylcytidine (agm2C) at the wobble position (C34) of tRNA(Ile2), converting the codon specificity from AUG to AUA. This is tRNA(Ile2) 2-agmatinylcytidine synthetase TiaS from Saccharolobus islandicus (strain L.S.2.15 / Lassen #1) (Sulfolobus islandicus).